We begin with the raw amino-acid sequence, 233 residues long: Ribonuclease HII (233 aa).

An RNase H type-2 domain is found at 21-211; it reads KIIAGVDEVG…LDALPQWRHL (191 aa). Residues Asp27, Glu28, and Asp119 each coordinate a divalent metal cation.

Belongs to the RNase HII family. The cofactor is Mn(2+). Mg(2+) is required as a cofactor.

The protein localises to the cytoplasm. It catalyses the reaction Endonucleolytic cleavage to 5'-phosphomonoester.. Its function is as follows. Endonuclease that specifically degrades the RNA of RNA-DNA hybrids. The protein is Ribonuclease HII (rnhB) of Streptomyces coelicolor (strain ATCC BAA-471 / A3(2) / M145).